Consider the following 428-residue polypeptide: Glutamyl-tRNA reductase (428 aa).

Substrate-binding positions include 55-58, Ser114, 119-121, and Gln125; these read TCNR and ETQ. Cys56 serves as the catalytic Nucleophile. 194-199 is a binding site for NADP(+); the sequence is GAGEMI.

It belongs to the glutamyl-tRNA reductase family. Homodimer.

The catalysed reaction is (S)-4-amino-5-oxopentanoate + tRNA(Glu) + NADP(+) = L-glutamyl-tRNA(Glu) + NADPH + H(+). It functions in the pathway porphyrin-containing compound metabolism; protoporphyrin-IX biosynthesis; 5-aminolevulinate from L-glutamyl-tRNA(Glu): step 1/2. Its function is as follows. Catalyzes the NADPH-dependent reduction of glutamyl-tRNA(Glu) to glutamate 1-semialdehyde (GSA). The sequence is that of Glutamyl-tRNA reductase from Paraburkholderia xenovorans (strain LB400).